The primary structure comprises 461 residues: tRNA modification GTPase MnmE (461 aa).

Residues Arg-27, Glu-89, and Arg-128 each coordinate (6S)-5-formyl-5,6,7,8-tetrahydrofolate. One can recognise a TrmE-type G domain in the interval 224–382 (GLATAIVGRP…LENAIEQLFF (159 aa)). Residue Asn-234 participates in K(+) binding. Residues 234 to 239 (NVGKSS), 253 to 259 (TDIAGTT), and 278 to 281 (DTAG) contribute to the GTP site. Ser-238 contributes to the Mg(2+) binding site. Residues Thr-253, Ile-255, and Thr-258 each coordinate K(+). Thr-259 is a binding site for Mg(2+). Lys-461 lines the (6S)-5-formyl-5,6,7,8-tetrahydrofolate pocket.

It belongs to the TRAFAC class TrmE-Era-EngA-EngB-Septin-like GTPase superfamily. TrmE GTPase family. As to quaternary structure, homodimer. Heterotetramer of two MnmE and two MnmG subunits. K(+) is required as a cofactor.

It is found in the cytoplasm. Functionally, exhibits a very high intrinsic GTPase hydrolysis rate. Involved in the addition of a carboxymethylaminomethyl (cmnm) group at the wobble position (U34) of certain tRNAs, forming tRNA-cmnm(5)s(2)U34. This is tRNA modification GTPase MnmE from Lactobacillus johnsonii (strain CNCM I-12250 / La1 / NCC 533).